A 407-amino-acid chain; its full sequence is Immunoglobulin superfamily member 5 (407 aa).

Over 1–266 (MGQKERSTAD…LGFSLPTWGK (266 aa)) the chain is Extracellular. Ig-like V-type domains are found at residues 39-139 (NEVI…LTVQ) and 142-231 (GELF…ATVN). Residues asparagine 59, asparagine 103, asparagine 210, and asparagine 231 are each glycosylated (N-linked (GlcNAc...) asparagine). Intrachain disulfides connect cysteine 60–cysteine 123 and cysteine 163–cysteine 215. Residues 267–285 (VGLGLAGTMLLTPTCTLTI) traverse the membrane as a helical segment. Topologically, residues 286-407 (RCCCCRRRCC…PEKVSNTTVV (122 aa)) are cytoplasmic. Positions 320–331 (KSEKEKTNKETE) are enriched in basic and acidic residues. The segment at 320–407 (KSEKEKTNKE…PEKVSNTTVV (88 aa)) is disordered. The span at 389-407 (PQASFNLASPEKVSNTTVV) shows a compositional bias: polar residues.

The protein belongs to the immunoglobulin superfamily. Interacts with MAGI1 at tight junctions, forms a tripartite complex with NPHS1. Interacts with LNX1 isoform 2 via its PDZ 2 domain, it may also interact with other isoforms containing this domain.

It localises to the apical cell membrane. The protein resides in the cell junction. The protein localises to the tight junction. Its function is as follows. Provides, together with MAGI1, an adhesion machinery at tight junctions, which may regulate the permeability of kidney glomerulus and small intestinal epithelial cells. Mediates calcium-independent homophilic cell adhesion. In testis, it may function as a cell adhesion molecule rather than a tight-junction protein. It may participate in the adhesion between spermatogonia-spermatogonia, spermatogonia-Sertoli cells, and Sertoli cells-Sertoli cells. This Homo sapiens (Human) protein is Immunoglobulin superfamily member 5 (IGSF5).